A 205-amino-acid chain; its full sequence is GTP cyclohydrolase-2 (205 aa).

49–53 (RLHSE) contacts GTP. Residues C54, C65, and C67 each contribute to the Zn(2+) site. GTP is bound by residues Q70, 92–94 (EGR), and T114. D126 acts as the Proton acceptor in catalysis. The Nucleophile role is filled by R128. GTP contacts are provided by T149 and K154.

This sequence belongs to the GTP cyclohydrolase II family. Zn(2+) is required as a cofactor.

The catalysed reaction is GTP + 4 H2O = 2,5-diamino-6-hydroxy-4-(5-phosphoribosylamino)-pyrimidine + formate + 2 phosphate + 3 H(+). Its pathway is cofactor biosynthesis; riboflavin biosynthesis; 5-amino-6-(D-ribitylamino)uracil from GTP: step 1/4. Functionally, catalyzes the conversion of GTP to 2,5-diamino-6-ribosylamino-4(3H)-pyrimidinone 5'-phosphate (DARP), formate and pyrophosphate. The chain is GTP cyclohydrolase-2 from Pseudomonas aeruginosa (strain UCBPP-PA14).